A 267-amino-acid chain; its full sequence is Proteasome subunit alpha (267 aa).

The tract at residues 231–267 (ETLLQERDSKESAESEEPIESEEGKKTGKKSDADSSD) is disordered. Basic and acidic residues-rich tracts occupy residues 234–243 (LQERDSKESA) and 252–267 (EEGK…DSSD).

It belongs to the peptidase T1A family. In terms of assembly, the 20S proteasome core is composed of 14 alpha and 14 beta subunits that assemble into four stacked heptameric rings, resulting in a barrel-shaped structure. The two inner rings, each composed of seven catalytic beta subunits, are sandwiched by two outer rings, each composed of seven alpha subunits. The catalytic chamber with the active sites is on the inside of the barrel. Has a gated structure, the ends of the cylinder being occluded by the N-termini of the alpha-subunits. Is capped by the proteasome-associated ATPase, ARC.

It is found in the cytoplasm. Its pathway is protein degradation; proteasomal Pup-dependent pathway. Its activity is regulated as follows. The formation of the proteasomal ATPase ARC-20S proteasome complex, likely via the docking of the C-termini of ARC into the intersubunit pockets in the alpha-rings, may trigger opening of the gate for substrate entry. Interconversion between the open-gate and close-gate conformations leads to a dynamic regulation of the 20S proteasome proteolysis activity. In terms of biological role, component of the proteasome core, a large protease complex with broad specificity involved in protein degradation. This Mycobacterium ulcerans (strain Agy99) protein is Proteasome subunit alpha.